Reading from the N-terminus, the 692-residue chain is Zinc finger protein 180 (692 aa).

Residues 72–145 (VNFKIVTVDF…GVKIERFTRD (74 aa)) enclose the KRAB domain. Glycyl lysine isopeptide (Lys-Gly) (interchain with G-Cter in SUMO2) cross-links involve residues Lys-138, Lys-159, Lys-168, Lys-191, Lys-198, Lys-226, Lys-304, Lys-313, and Lys-330. 12 consecutive C2H2-type zinc fingers follow at residues 353–375 (FECN…QRTH), 381–403 (YECS…QRTH), 409–431 (YRCN…QRTH), 437–459 (YECN…QRTH), 465–487 (YECN…QRIH), 493–515 (YECN…QRTH), 521–543 (FECN…QRTH), 549–571 (YECS…QRIH), 577–599 (YECN…QRTH), 605–627 (YECS…QRTH), 633–655 (FECN…QRTH), and 661–683 (FTCI…QATH).

The protein belongs to the krueppel C2H2-type zinc-finger protein family.

The protein resides in the nucleus. In terms of biological role, may be involved in transcriptional regulation. The protein is Zinc finger protein 180 (ZNF180) of Homo sapiens (Human).